The following is a 77-amino-acid chain: Metallocarboxypeptidase inhibitor (77 aa).

The N-terminal stretch at 1-32 (MAQKFTILFTILLVVIAAQDVMAQDATLTKLF) is a signal peptide. Q33 carries the post-translational modification Pyrrolidone carboxylic acid. Cystine bridges form between C39–C55, C43–C58, and C49–C65. Positions 70–77 (GRAMAIGV) are cleaved as a propeptide — hydrophobic peptide.

To potato MCPI. In terms of tissue distribution, ovaries.

May play a defensive role against insect attacks. This chain is Metallocarboxypeptidase inhibitor, found in Solanum lycopersicum (Tomato).